Here is a 177-residue protein sequence, read N- to C-terminus: Inorganic pyrophosphatase (177 aa).

Substrate contacts are provided by lysine 29, arginine 43, and tyrosine 55. Aspartate 65, aspartate 70, and aspartate 102 together coordinate Mg(2+). Residue tyrosine 141 participates in substrate binding.

This sequence belongs to the PPase family. Homohexamer. It depends on Mg(2+) as a cofactor.

It localises to the cytoplasm. It carries out the reaction diphosphate + H2O = 2 phosphate + H(+). Functionally, catalyzes the hydrolysis of inorganic pyrophosphate (PPi) forming two phosphate ions. In Aquifex pyrophilus, this protein is Inorganic pyrophosphatase.